The sequence spans 396 residues: S-arrestin (396 aa).

Residues 375–386 (ARDPLKGELQAE) are compositionally biased toward basic and acidic residues. The tract at residues 375–396 (ARDPLKGELQAEEKEEEEDDEK) is disordered. The span at 387–396 (EKEEEEDDEK) shows a compositional bias: acidic residues.

The protein belongs to the arrestin family. In terms of assembly, interacts with RHO (via the phosphorylated C-terminus).

The protein localises to the cell projection. It localises to the cilium. It is found in the photoreceptor outer segment. The protein resides in the membrane. Its function is as follows. Binds to photoactivated, phosphorylated RHO and terminates RHO signaling via G-proteins by competing with G-proteins for the same binding site on RHO. May play a role in preventing light-dependent degeneration of retinal photoreceptor cells. This chain is S-arrestin (sag), found in Xenopus laevis (African clawed frog).